Consider the following 505-residue polypeptide: Maturase K (505 aa).

Belongs to the intron maturase 2 family. MatK subfamily.

The protein localises to the plastid. It localises to the chloroplast. In terms of biological role, usually encoded in the trnK tRNA gene intron. Probably assists in splicing its own and other chloroplast group II introns. The sequence is that of Maturase K from Morus alba (White mulberry).